We begin with the raw amino-acid sequence, 518 residues long: Putative cysteine ligase BshC (518 aa).

The stretch at 404-474 (AAASAERLAA…RARQLTRLKR (71 aa)) forms a coiled coil.

This sequence belongs to the BshC family.

The sequence is that of Putative cysteine ligase BshC from Deinococcus geothermalis (strain DSM 11300 / CIP 105573 / AG-3a).